We begin with the raw amino-acid sequence, 59 residues long: UPF0434 protein Shew185_1670 (59 aa).

It belongs to the UPF0434 family.

The chain is UPF0434 protein Shew185_1670 from Shewanella baltica (strain OS185).